The chain runs to 51 residues: Large ribosomal subunit protein bL33 (51 aa).

It belongs to the bacterial ribosomal protein bL33 family.

This chain is Large ribosomal subunit protein bL33, found in Nitrosospira multiformis (strain ATCC 25196 / NCIMB 11849 / C 71).